The chain runs to 359 residues: Guanine nucleotide-binding protein G(q) subunit alpha (359 aa).

2 S-palmitoyl cysteine lipidation sites follow: C9 and C10. The region spanning R38–V359 is the G-alpha domain. The G1 motif stretch occupies residues K41–T54. GTP contacts are provided by S50, G51, K52, S53, T54, S156, L180, R181, and R183. S53 is a Mg(2+) binding site. A G2 motif region spans residues D178–T186. T186 contributes to the Mg(2+) binding site. Residues F201–R210 form a G3 motif region. 5-glutamyl histamine is present on Q209. The interval I270–D277 is G4 motif. GTP contacts are provided by N274, K275, D277, and A331. The interval T329–T334 is G5 motif.

This sequence belongs to the G-alpha family. G(q) subfamily. G proteins are composed of 3 units; alpha, beta and gamma. The alpha chain contains the guanine nucleotide binding site. Interacts (GDP-bound form) with RIC8A (via C-terminus); promoting GNAQ folding and association with the plasma membrane. Binds NHERF1. Forms a complex with PECAM1 and BDKRB2. Interacts with GAS2L2. In terms of processing, palmitoylated by ZDHHC3 and ZDHHC7. Palmitoylation occurs in the Golgi and participates in the localization of GNAQ to the plasma membrane. Histaminylated at Gln-209 residues by TGM2.

The protein localises to the cell membrane. Its subcellular location is the golgi apparatus. The protein resides in the nucleus. It localises to the nucleus membrane. The enzyme catalyses GTP + H2O = GDP + phosphate + H(+). Its function is as follows. Guanine nucleotide-binding proteins (G proteins) function as transducers downstream of G protein-coupled receptors (GPCRs) in numerous signaling cascades. The alpha chain contains the guanine nucleotide binding site and alternates between an active, GTP-bound state and an inactive, GDP-bound state. Signaling by an activated GPCR promotes GDP release and GTP binding. The alpha subunit has a low GTPase activity that converts bound GTP to GDP, thereby terminating the signal. Both GDP release and GTP hydrolysis are modulated by numerous regulatory proteins. Signaling is mediated via phospholipase C-beta-dependent inositol lipid hydrolysis for signal propagation: activates phospholipase C-beta: following GPCR activation, GNAQ activates PLC-beta (PLCB1, PLCB2, PLCB3 or PLCB4), leading to production of diacylglycerol (DAG) and inositol 1,4,5-trisphosphate (IP3). Required for platelet activation. Regulates B-cell selection and survival and is required to prevent B-cell-dependent autoimmunity. Regulates chemotaxis of BM-derived neutrophils and dendritic cells (in vitro). Transduces FFAR4 signaling in response to long-chain fatty acids (LCFAs). Together with GNA11, required for heart development. The polypeptide is Guanine nucleotide-binding protein G(q) subunit alpha (Gnaq) (Mus musculus (Mouse)).